A 162-amino-acid polypeptide reads, in one-letter code: Lipoprotein signal peptidase (162 aa).

3 consecutive transmembrane segments (helical) span residues 12–32 (WLWL…LILQ), 70–90 (WFFA…MYRS), and 102–122 (ALII…GFVV). Active-site residues include aspartate 123 and aspartate 141. A helical transmembrane segment spans residues 137–157 (FNLADSAICIGAALIVLEGFL).

It belongs to the peptidase A8 family.

The protein localises to the cell inner membrane. It catalyses the reaction Release of signal peptides from bacterial membrane prolipoproteins. Hydrolyzes -Xaa-Yaa-Zaa-|-(S,diacylglyceryl)Cys-, in which Xaa is hydrophobic (preferably Leu), and Yaa (Ala or Ser) and Zaa (Gly or Ala) have small, neutral side chains.. Its pathway is protein modification; lipoprotein biosynthesis (signal peptide cleavage). Functionally, this protein specifically catalyzes the removal of signal peptides from prolipoproteins. This is Lipoprotein signal peptidase from Citrobacter koseri (strain ATCC BAA-895 / CDC 4225-83 / SGSC4696).